The chain runs to 373 residues: Flagellar P-ring protein (373 aa).

An N-terminal signal peptide occupies residues methionine 1–serine 27.

Belongs to the FlgI family. As to quaternary structure, the basal body constitutes a major portion of the flagellar organelle and consists of four rings (L,P,S, and M) mounted on a central rod.

It is found in the periplasm. The protein localises to the bacterial flagellum basal body. Its function is as follows. Assembles around the rod to form the L-ring and probably protects the motor/basal body from shearing forces during rotation. In Rhodopseudomonas palustris (strain BisB5), this protein is Flagellar P-ring protein.